A 136-amino-acid chain; its full sequence is Large ribosomal subunit protein uL16c (136 aa).

Residues 1 to 20 (MLSPKRTKFRKQHRGRMKGK) are disordered.

This sequence belongs to the universal ribosomal protein uL16 family. Part of the 50S ribosomal subunit.

The protein localises to the plastid. It is found in the chloroplast. The chain is Large ribosomal subunit protein uL16c from Brachypodium distachyon (Purple false brome).